A 114-amino-acid chain; its full sequence is Large ribosomal subunit protein bL20 (114 aa).

This sequence belongs to the bacterial ribosomal protein bL20 family.

Binds directly to 23S ribosomal RNA and is necessary for the in vitro assembly process of the 50S ribosomal subunit. It is not involved in the protein synthesizing functions of that subunit. The chain is Large ribosomal subunit protein bL20 from Parabacteroides distasonis (strain ATCC 8503 / DSM 20701 / CIP 104284 / JCM 5825 / NCTC 11152).